The following is a 272-amino-acid chain: Dickkopf-related protein 1 (272 aa).

The signal sequence occupies residues 1–31; it reads MMVVCAAAAVRFLAVFTMMALCSLPLLGASA. A glycan (O-linked (GalNAc...) serine) is linked at Ser-62. Cystine bridges form between Cys-86–Cys-98, Cys-92–Cys-114, Cys-117–Cys-131, Cys-124–Cys-136, Cys-130–Cys-141, Cys-195–Cys-207, Cys-201–Cys-216, Cys-206–Cys-243, Cys-226–Cys-251, and Cys-245–Cys-269. A DKK-type Cys-1 region spans residues 86–141; sequence CAEDEECGSDEYCSSPSRGAAGVGGVQICLACRKRRKRCMRHAMCCPGNYCKNGIC. Residues 195–269 form a DKK-type Cys-2 region; sequence CLRSSDCAAG…ASNSSRLHTC (75 aa). The N-linked (GlcNAc...) asparagine glycan is linked to Asn-262.

Belongs to the dickkopf family. In terms of assembly, interacts (via the C-terminal Cys-rich domain) with LRP5 (via beta-propeller regions 3 and 4); the interaction, enhanced by MESD and or KREMEN, antagonizes Wnt-mediated signaling. Interacts with LRP6. Forms a ternary complex with LRP6 and KREM1. Interacts with KREM1.

Its subcellular location is the secreted. Its function is as follows. Antagonizes canonical Wnt signaling by inhibiting LRP5/6 interaction with Wnt and by forming a ternary complex with the transmembrane protein KREMEN that promotes internalization of LRP5/6. Inhibits the pro-apoptotic function of KREMEN1 in a Wnt-independent manner, and has anti-apoptotic activity. Plays a role in limb development; attenuates Wnt signaling in the developing limb to allow normal limb patterning. This chain is Dickkopf-related protein 1 (Dkk1), found in Mus musculus (Mouse).